The chain runs to 303 residues: tRNA (guanine-N(7)-)-methyltransferase (303 aa).

Residues 1–64 (MPKPHQVQVI…STSDKISLPR (64 aa)) form a disordered region. A compositionally biased stretch (basic and acidic residues) spans 10-38 (IKDRETQLREQQEAESKRRTYRDVKEETR). S-adenosyl-L-methionine is bound by residues G118, 141–142 (EI), 177–178 (NA), and C197. The active site involves D200. 275 to 277 (TEE) is an S-adenosyl-L-methionine binding site.

This sequence belongs to the class I-like SAM-binding methyltransferase superfamily. TrmB family. Forms a complex with TRM82.

It is found in the nucleus. It catalyses the reaction guanosine(46) in tRNA + S-adenosyl-L-methionine = N(7)-methylguanosine(46) in tRNA + S-adenosyl-L-homocysteine. Its pathway is tRNA modification; N(7)-methylguanine-tRNA biosynthesis. Catalyzes the formation of N(7)-methylguanine at position 46 (m7G46) in tRNA. This chain is tRNA (guanine-N(7)-)-methyltransferase, found in Scheffersomyces stipitis (strain ATCC 58785 / CBS 6054 / NBRC 10063 / NRRL Y-11545) (Yeast).